The sequence spans 647 residues: Threonine--tRNA ligase (647 aa).

The 61-residue stretch at 1–61 folds into the TGS domain; sequence MIKITFPDGA…EEDGSIEIVT (61 aa). The tract at residues 240 to 538 is catalytic; it reads DHRKLGKELD…LIETYKGAFP (299 aa). C334, H385, and H515 together coordinate Zn(2+).

It belongs to the class-II aminoacyl-tRNA synthetase family. Homodimer. It depends on Zn(2+) as a cofactor.

Its subcellular location is the cytoplasm. It catalyses the reaction tRNA(Thr) + L-threonine + ATP = L-threonyl-tRNA(Thr) + AMP + diphosphate + H(+). Functionally, catalyzes the attachment of threonine to tRNA(Thr) in a two-step reaction: L-threonine is first activated by ATP to form Thr-AMP and then transferred to the acceptor end of tRNA(Thr). Also edits incorrectly charged L-seryl-tRNA(Thr). The sequence is that of Threonine--tRNA ligase from Streptococcus pyogenes serotype M1.